We begin with the raw amino-acid sequence, 382 residues long: MKITRLTTYHAAPRWLFLKVETDEGITGWGEPVIEGRARSVEAAVHELAGYVVGKDPARINDLWQTLYRAGFYRGGAILMSAIAGIDQALWDIKGKALGVPVYELLGGLVRDRMKTYRWVGGDRPGAIIQQITDYRALGFDTFKFNGTEEMKLIDSARAVDAAVVKVAEIRGAFGNTIDFGIDFHGRVGAPMAKALLRELEPFKPLFVEEPVLAEQAEYYPRLAASTSIPLAAGERMFSRFEFKNVLCAGGIGMVQPDLSHAGGITECVKIAAMAEAYDVGFAPHCPLGPIALAACLHVDFVSHNAVLQEQSIGIHYNEGADLLDYVVNKDDFHCVDGSIAALPKPGLGVEIDEEMLKRANENPPDWRNPVWRHSDGSIAEW.

Position 183 (Asp-183) interacts with Mg(2+). His-185 functions as the Proton donor in the catalytic mechanism. 2 residues coordinate Mg(2+): Glu-209 and Glu-235. The Proton acceptor role is filled by His-285. A disordered region spans residues Asn-361 to Trp-382.

Belongs to the mandelate racemase/muconate lactonizing enzyme family. GalD subfamily. It depends on Mg(2+) as a cofactor.

It carries out the reaction D-galactonate = 2-dehydro-3-deoxy-D-galactonate + H2O. Its pathway is carbohydrate acid metabolism; D-galactonate degradation; D-glyceraldehyde 3-phosphate and pyruvate from D-galactonate: step 1/3. In terms of biological role, catalyzes the dehydration of D-galactonate to 2-keto-3-deoxy-D-galactonate. This chain is D-galactonate dehydratase, found in Xanthomonas axonopodis pv. citri (strain 306).